We begin with the raw amino-acid sequence, 71 residues long: Large ribosomal subunit protein bL31 (71 aa).

Residues Cys16, Cys18, Cys36, and Cys39 each coordinate Zn(2+).

Belongs to the bacterial ribosomal protein bL31 family. Type A subfamily. In terms of assembly, part of the 50S ribosomal subunit. It depends on Zn(2+) as a cofactor.

Functionally, binds the 23S rRNA. The chain is Large ribosomal subunit protein bL31 from Thermotoga maritima (strain ATCC 43589 / DSM 3109 / JCM 10099 / NBRC 100826 / MSB8).